We begin with the raw amino-acid sequence, 138 residues long: Large ribosomal subunit protein bL19 (138 aa).

It belongs to the bacterial ribosomal protein bL19 family.

Its function is as follows. This protein is located at the 30S-50S ribosomal subunit interface and may play a role in the structure and function of the aminoacyl-tRNA binding site. The polypeptide is Large ribosomal subunit protein bL19 (Rickettsia typhi (strain ATCC VR-144 / Wilmington)).